We begin with the raw amino-acid sequence, 234 residues long: 1-(5-phosphoribosyl)-5-[(5-phosphoribosylamino)methylideneamino] imidazole-4-carboxamide isomerase (234 aa).

The active-site Proton acceptor is the Asp9. Asp131 functions as the Proton donor in the catalytic mechanism.

The protein belongs to the HisA/HisF family.

The protein resides in the cytoplasm. The catalysed reaction is 1-(5-phospho-beta-D-ribosyl)-5-[(5-phospho-beta-D-ribosylamino)methylideneamino]imidazole-4-carboxamide = 5-[(5-phospho-1-deoxy-D-ribulos-1-ylimino)methylamino]-1-(5-phospho-beta-D-ribosyl)imidazole-4-carboxamide. Its pathway is amino-acid biosynthesis; L-histidine biosynthesis; L-histidine from 5-phospho-alpha-D-ribose 1-diphosphate: step 4/9. The sequence is that of 1-(5-phosphoribosyl)-5-[(5-phosphoribosylamino)methylideneamino] imidazole-4-carboxamide isomerase from Staphylococcus aureus (strain NCTC 8325 / PS 47).